The following is a 228-amino-acid chain: Triosephosphate isomerase (228 aa).

9–11 (NFK) contacts substrate. Catalysis depends on H93, which acts as the Electrophile. The active-site Proton acceptor is E141. Residues I146, G180, and 201 to 202 (AS) each bind substrate.

It belongs to the triosephosphate isomerase family. As to quaternary structure, homotetramer; dimer of dimers.

It is found in the cytoplasm. The enzyme catalyses D-glyceraldehyde 3-phosphate = dihydroxyacetone phosphate. It functions in the pathway carbohydrate biosynthesis; gluconeogenesis. The protein operates within carbohydrate degradation; glycolysis; D-glyceraldehyde 3-phosphate from glycerone phosphate: step 1/1. Functionally, involved in the gluconeogenesis. Catalyzes stereospecifically the conversion of dihydroxyacetone phosphate (DHAP) to D-glyceraldehyde-3-phosphate (G3P). In Metallosphaera sedula (strain ATCC 51363 / DSM 5348 / JCM 9185 / NBRC 15509 / TH2), this protein is Triosephosphate isomerase.